We begin with the raw amino-acid sequence, 422 residues long: MGFSSLVCVLFFFLGVKVYCQYESYQWDEDYDQEPDDVYQTEFQFQQNINYEAPFHQHTLGCASECFCPPNFPSSMYCDNRKLKTIPNIPAHIQQVYLQFNEIEAVTADSFINATHLKEINLSHNKIKSQKIDHGVFATLPNLLQLHLQHNNLEDFPFPLPKSLERIFLGYNEISRLQTNAVNGLVNLTMLDLCFNKIDDSVLQEKVLAKMEKLMQLNLCNNRLESMPPGLPSSLMYLSLENNSISSIPENYFNKLPKLHALRISHNKLQDIPYNIFNLSNLIELNVGHNKLKQAFYIPRNLEHLYLENNEIENVNVTVMCPSVDPLHYHHLTHIRIDQNKLKAPISSYIFLCFPHIHTIYYGEQQSTNGQTIQLKTQVFRRFQDDGDSEDHDDHHEGPEEEGTEENIDAHYYGSQEWQETI.

An N-terminal signal peptide occupies residues 1 to 20; that stretch reads MGFSSLVCVLFFFLGVKVYC. Residues 21–27 constitute a propeptide that is removed on maturation; it reads QYESYQW. Sulfotyrosine is present on residues Y22, Y25, Y31, Y39, Y51, and Y77. Residues 53–91 enclose the LRRNT domain; sequence APFHQHTLGCASECFCPPNFPSSMYCDNRKLKTIPNIPA. 11 LRR repeats span residues 92 to 113, 116 to 129, 142 to 164, 165 to 184, 187 to 207, 213 to 233, 234 to 255, 258 to 280, 281 to 294, 301 to 322, and 331 to 353; these read HIQQVYLQFNEIEAVTADSFIN, HLKEINLSHNKIKS, NLLQLHLQHNNLEDFPFPLPKSL, ERIFLGYNEISRLQTNAVNG, NLTMLDLCFNKIDDSVLQEKV, KLMQLNLCNNRLESMPPGLPS, SLMYLSLENNSISSIPENYFNK, KLHALRISHNKLQDIPYNIFNLS, NLIELNVGHNKLKQ, NLEHLYLENNEIENVNVTVMCP, and HLTHIRIDQNKLKAPISSYIFLC. N-linked (GlcNAc...) asparagine glycans are attached at residues N113 and N121. N-linked (GlcNAc...) asparagine glycosylation occurs at N187. N-linked (GlcNAc...) asparagine glycans are attached at residues N242 and N278. N316 carries an N-linked (GlcNAc...) asparagine glycan. The cysteines at positions 321 and 353 are disulfide-linked. Residues 385-422 are disordered; that stretch reads DDGDSEDHDDHHEGPEEEGTEENIDAHYYGSQEWQETI. A sulfotyrosine mark is found at Y412 and Y413.

Belongs to the small leucine-rich proteoglycan (SLRP) family. SLRP class II subfamily. As to quaternary structure, binds the alpha(V)beta(3)-integrin. In terms of processing, the N-terminus is blocked. Post-translationally, glycosylated; contains keratan sulfate. Sulfated on tyrosine residue(s). In terms of tissue distribution, bone specific (at protein level).

It is found in the secreted. It localises to the extracellular space. The protein localises to the extracellular matrix. Its function is as follows. May be implicated in biomineralization processes. Has a function in binding of osteoblasts via the alpha(V)beta(3)-integrin. This Bos taurus (Bovine) protein is Osteomodulin (OMD).